We begin with the raw amino-acid sequence, 695 residues long: Probable serine/threonine-protein kinase abkD (695 aa).

A compositionally biased stretch (polar residues) spans 105–119; the sequence is TTKPQPCQAKPPSSK. Residues 105-149 are disordered; that stretch reads TTKPQPCQAKPPSSKQQQQQQQQQQQQQQQQQQQQSKKKTSKDRL. A coiled-coil region spans residues 118–150; the sequence is SKQQQQQQQQQQQQQQQQQQQQSKKKTSKDRLR. Residues 120–139 are compositionally biased toward low complexity; that stretch reads QQQQQQQQQQQQQQQQQQQQ. A helical transmembrane segment spans residues 177 to 193; sequence TIASILAAIALIIYSYE. In terms of domain architecture, Protein kinase spans 317–695; it reads DFDRLPIAAA…LIKDQMKKLG (379 aa). ATP is bound by residues 323 to 331 and Lys-345; that span reads IAAASLAQV. The Proton acceptor role is filled by Asp-477.

Belongs to the protein kinase superfamily. ADCK protein kinase family.

The protein localises to the membrane. This is Probable serine/threonine-protein kinase abkD (abkD) from Dictyostelium discoideum (Social amoeba).